A 360-amino-acid polypeptide reads, in one-letter code: Homoserine O-acetyltransferase (360 aa).

The region spanning 41-344 (NAILICHALT…DYGHDAFLVD (304 aa)) is the AB hydrolase-1 domain. Ser-144 functions as the Nucleophile in the catalytic mechanism. Substrate is bound at residue Arg-213. Catalysis depends on residues Asp-305 and His-338. Asp-339 contacts substrate.

Belongs to the AB hydrolase superfamily. MetX family. Homodimer.

The protein resides in the cytoplasm. It carries out the reaction L-homoserine + acetyl-CoA = O-acetyl-L-homoserine + CoA. It participates in amino-acid biosynthesis; L-methionine biosynthesis via de novo pathway; O-acetyl-L-homoserine from L-homoserine: step 1/1. Its function is as follows. Transfers an acetyl group from acetyl-CoA to L-homoserine, forming acetyl-L-homoserine. The chain is Homoserine O-acetyltransferase from Pasteurella multocida (strain Pm70).